The chain runs to 291 residues: MTRREGLAALLGESAKLAQGPVVGHTSTLRVDQLRAGSQQPRRQFGTEGLTELAASIQSQGILQPLLVRAVGDTYEIVAGERRWRAAQLAGLTEVPVIVKSLTDQEAAVIALIENLQRENLNLIDEVEGKLLLVANALGIASEQARSRLNELLRNPVPEDVETLSAVFLPLGRESWQSFAKNKVRILNYPPPLVEALRQGMALTMATLIARAPENKQADLIAKVQQGAGRKEIVAEVERLCHRPTVRLEKRVAQALGNQKWLDRLDPQDAEAMQHWLSQMPRALQQEIGDN.

Belongs to the ParB family.

This is Probable plasmid-partitioning protein ParB from Deinococcus radiodurans (strain ATCC 13939 / DSM 20539 / JCM 16871 / CCUG 27074 / LMG 4051 / NBRC 15346 / NCIMB 9279 / VKM B-1422 / R1).